We begin with the raw amino-acid sequence, 199 residues long: Inner membrane-spanning protein YciB (199 aa).

Helical transmembrane passes span 4 to 24 (FIDF…PRIV), 36 to 56 (IFSA…TLFL), 64 to 84 (GQWI…TFQS), 90 to 110 (WKAP…HFIG), 135 to 155 (LAWV…AFTF), and 162 to 182 (FKVF…GVFL).

Belongs to the YciB family.

The protein resides in the cell inner membrane. Functionally, plays a role in cell envelope biogenesis, maintenance of cell envelope integrity and membrane homeostasis. The chain is Inner membrane-spanning protein YciB from Azotobacter vinelandii (strain DJ / ATCC BAA-1303).